The chain runs to 729 residues: Polyribonucleotide nucleotidyltransferase (729 aa).

D485 and D491 together coordinate Mg(2+). The 60-residue stretch at 552–611 (PRITTMKVAEDKIRTIIGKGGATIKGLIESTGVSIDIDDSGVIQLFSPDKMALEEAQKQI) folds into the KH domain. An S1 motif domain is found at 621-689 (GQTYQGKVSK…KQGRVKLEWK (69 aa)). The segment at 710–729 (TMEEQSEEINSGNKISEEEE) is disordered.

It belongs to the polyribonucleotide nucleotidyltransferase family. In terms of assembly, component of the RNA degradosome, which is a multiprotein complex involved in RNA processing and mRNA degradation. Requires Mg(2+) as cofactor.

The protein resides in the cytoplasm. It carries out the reaction RNA(n+1) + phosphate = RNA(n) + a ribonucleoside 5'-diphosphate. Involved in mRNA degradation. Catalyzes the phosphorolysis of single-stranded polyribonucleotides processively in the 3'- to 5'-direction. The chain is Polyribonucleotide nucleotidyltransferase from Legionella pneumophila (strain Paris).